A 306-amino-acid chain; its full sequence is Bifunctional protein FolD (306 aa).

Residues 169–171 (GRS), serine 194, and isoleucine 235 each bind NADP(+).

This sequence belongs to the tetrahydrofolate dehydrogenase/cyclohydrolase family. In terms of assembly, homodimer.

The enzyme catalyses (6R)-5,10-methylene-5,6,7,8-tetrahydrofolate + NADP(+) = (6R)-5,10-methenyltetrahydrofolate + NADPH. It carries out the reaction (6R)-5,10-methenyltetrahydrofolate + H2O = (6R)-10-formyltetrahydrofolate + H(+). Its pathway is one-carbon metabolism; tetrahydrofolate interconversion. Its function is as follows. Catalyzes the oxidation of 5,10-methylenetetrahydrofolate to 5,10-methenyltetrahydrofolate and then the hydrolysis of 5,10-methenyltetrahydrofolate to 10-formyltetrahydrofolate. The protein is Bifunctional protein FolD of Thermosynechococcus vestitus (strain NIES-2133 / IAM M-273 / BP-1).